We begin with the raw amino-acid sequence, 130 residues long: Small ribosomal subunit protein uS11 (130 aa).

It belongs to the universal ribosomal protein uS11 family. In terms of assembly, part of the 30S ribosomal subunit. Interacts with proteins S7 and S18. Binds to IF-3.

Located on the platform of the 30S subunit, it bridges several disparate RNA helices of the 16S rRNA. Forms part of the Shine-Dalgarno cleft in the 70S ribosome. This Prochlorococcus marinus (strain MIT 9301) protein is Small ribosomal subunit protein uS11.